Here is a 399-residue protein sequence, read N- to C-terminus: Beta-1,4-galactosyltransferase 1 (399 aa).

The Cytoplasmic portion of the chain corresponds to 1 to 24; sequence MRFREQFLGGSAAMPGATLQRACR. Residues 25-44 traverse the membrane as a helical; Signal-anchor for type II membrane protein segment; it reads LLVAVCALHLGVTLVYYLSG. The Lumenal segment spans residues 45–399; sequence RDLSRLPQLV…QITVDIGTPR (355 aa). The segment at 61–113 is disordered; the sequence is QGGTNGAAASKQPPGEQRPRGARPPPPLGVSPKPRPGLDSSPGAASGPGLKSN. The span at 82–95 shows a compositional bias: pro residues; that stretch reads ARPPPPLGVSPKPR. A glycan (N-linked (GlcNAc...) asparagine) is linked at N113. Cysteines 131 and 173 form a disulfide. UDP-alpha-D-galactose is bound by residues 184–188, 223–225, 250–251, and W311; these read PFRNR, FNR, and VD. A disulfide bridge links C244 with C263. Residue D251 coordinates Mn(2+). Residue 313-316 participates in N-acetyl-D-glucosamine binding; sequence GEDD. Residue H344 participates in Mn(2+) binding. 344–346 provides a ligand contact to UDP-alpha-D-galactose; that stretch reads HSR. N-acetyl-D-glucosamine is bound at residue R356.

The protein belongs to the glycosyltransferase 7 family. In terms of assembly, homodimer; and heterodimer with alpha-lactalbumin to form lactose synthase. Interacts (via N-terminal cytoplasmic domain) with UBE2Q1 (via N-terminus); the interaction is direct. The cofactor is Mn(2+). The soluble form derives from the membrane forms by proteolytic processing.

It localises to the golgi apparatus. The protein resides in the golgi stack membrane. Its subcellular location is the cell membrane. The protein localises to the cell surface. It is found in the cell projection. It localises to the filopodium. The protein resides in the secreted. The enzyme catalyses D-glucose + UDP-alpha-D-galactose = lactose + UDP + H(+). It catalyses the reaction an N-acetyl-beta-D-glucosaminyl derivative + UDP-alpha-D-galactose = a beta-D-galactosyl-(1-&gt;4)-N-acetyl-beta-D-glucosaminyl derivative + UDP + H(+). The catalysed reaction is N-acetyl-D-glucosamine + UDP-alpha-D-galactose = beta-D-galactosyl-(1-&gt;4)-N-acetyl-D-glucosamine + UDP + H(+). It carries out the reaction a beta-D-GlcNAc-(1-&gt;3)-beta-D-Gal-(1-&gt;4)-beta-D-Glc-(1&lt;-&gt;1)-Cer(d18:1(4E)) + UDP-alpha-D-galactose = a neolactoside nLc4Cer(d18:1(4E)) + UDP + H(+). The enzyme catalyses a beta-D-glucosylceramide + UDP-alpha-D-galactose = a beta-D-galactosyl-(1-&gt;4)-beta-D-glucosyl-(1&lt;-&gt;1)-ceramide + UDP + H(+). It catalyses the reaction a neolactoside IV(3)-beta-GlcNAc-nLc4Cer + UDP-alpha-D-galactose = a neolactoside nLc6Cer + UDP + H(+). It functions in the pathway protein modification; protein glycosylation. Functionally, the Golgi complex form catalyzes the production of lactose in the lactating mammary gland and could also be responsible for the synthesis of complex-type N-linked oligosaccharides in many glycoproteins as well as the carbohydrate moieties of glycolipids. Its function is as follows. The cell surface form functions as a recognition molecule during a variety of cell to cell and cell to matrix interactions, as those occurring during development and egg fertilization, by binding to specific oligosaccharide ligands on opposing cells or in the extracellular matrix. The secreted form is responsible for the synthesis of complex-type to N-linked oligosaccharides in many glycoproteins as well as the carbohydrate moieties of glycolipids. In Mus musculus (Mouse), this protein is Beta-1,4-galactosyltransferase 1.